The sequence spans 287 residues: Eukaryotic translation initiation factor 3 subunit F (287 aa).

The region spanning 12-142 (VRVHPVVLFQ…IKAYVCVSLG (131 aa)) is the MPN domain.

Belongs to the eIF-3 subunit F family. Component of the eukaryotic translation initiation factor 3 (eIF-3) complex.

It is found in the cytoplasm. Its function is as follows. Component of the eukaryotic translation initiation factor 3 (eIF-3) complex, which is involved in protein synthesis of a specialized repertoire of mRNAs and, together with other initiation factors, stimulates binding of mRNA and methionyl-tRNAi to the 40S ribosome. The eIF-3 complex specifically targets and initiates translation of a subset of mRNAs involved in cell proliferation. The sequence is that of Eukaryotic translation initiation factor 3 subunit F from Aedes aegypti (Yellowfever mosquito).